We begin with the raw amino-acid sequence, 250 residues long: Oil body-associated protein 2B (250 aa).

Residues 1-29 (MSSSDQNPAATPASSGPAEPSPPGRPTAV) are disordered. The span at 8–18 (PAATPASSGPA) shows a compositional bias: low complexity.

This sequence belongs to the OBAP family.

The polypeptide is Oil body-associated protein 2B (Zea mays (Maize)).